A 386-amino-acid chain; its full sequence is Phosphoglycerate kinase (386 aa).

Residues 21–23 (DLN), Arg36, 59–62 (HLGR), Arg112, and Arg145 each bind substrate. ATP contacts are provided by residues Lys196, Glu313, and 339-342 (GGDT).

This sequence belongs to the phosphoglycerate kinase family. Monomer.

The protein localises to the cytoplasm. It carries out the reaction (2R)-3-phosphoglycerate + ATP = (2R)-3-phospho-glyceroyl phosphate + ADP. It participates in carbohydrate degradation; glycolysis; pyruvate from D-glyceraldehyde 3-phosphate: step 2/5. The protein is Phosphoglycerate kinase of Haemophilus influenzae (strain PittEE).